A 619-amino-acid chain; its full sequence is Probable ATP-dependent RNA helicase DDX59 (619 aa).

K26 participates in a covalent cross-link: Glycyl lysine isopeptide (Lys-Gly) (interchain with G-Cter in SUMO2). The tract at residues 57–98 (SESCPFPSPGGQLAEVHSVSPEQGAKDSHPSEEPVKSFSKTQ) is disordered. Residues S64 and S76 each carry the phosphoserine modification. The segment covering 80–91 (GAKDSHPSEEPV) has biased composition (basic and acidic residues). The HIT-type zinc finger occupies 104 to 133 (GEPICVVCGRYGEYICDKTDEDVCSLECKA). A disordered region spans residues 142 to 161 (KEEKSKLSNPQKADSEPESP). A phosphoserine mark is found at S156 and S160. A Q motif motif is present at residues 203–231 (IDFEHCSLPEVLNHNLKKSGYEVPTPIQM). Positions 234–405 (IPVGLLGRDI…SQLLHNPVRI (172 aa)) constitute a Helicase ATP-binding domain. Residue 247 to 254 (ADTGSGKT) coordinates ATP. Positions 353–356 (DEAD) match the DEAD box motif. One can recognise a Helicase C-terminal domain in the interval 416–579 (NVRQIILWVE…ILPPQLLNSP (164 aa)).

Belongs to the DEAD box helicase family. DDX59 subfamily. In terms of assembly, interacts (via HIT-type zinc finger) with the RUVBL1/RUVBL2 complex in the presence of ADP. As to expression, expressed in fibroblasts (at protein level).

It localises to the cytoplasm. The protein resides in the nucleus. It carries out the reaction ATP + H2O = ADP + phosphate + H(+). This Homo sapiens (Human) protein is Probable ATP-dependent RNA helicase DDX59 (DDX59).